Reading from the N-terminus, the 520-residue chain is Peptide chain release factor 3 (520 aa).

The tr-type G domain maps to 8 to 277 (ESRKTFAIIS…HAPMPNARQT (270 aa)). GTP is bound by residues 17 to 24 (SHPDAGKT), 85 to 89 (DTPGH), and 139 to 142 (NKLD).

The protein belongs to the TRAFAC class translation factor GTPase superfamily. Classic translation factor GTPase family. PrfC subfamily.

The protein localises to the cytoplasm. Its function is as follows. Increases the formation of ribosomal termination complexes and stimulates activities of RF-1 and RF-2. It binds guanine nucleotides and has strong preference for UGA stop codons. It may interact directly with the ribosome. The stimulation of RF-1 and RF-2 is significantly reduced by GTP and GDP, but not by GMP. This Staphylococcus epidermidis (strain ATCC 35984 / DSM 28319 / BCRC 17069 / CCUG 31568 / BM 3577 / RP62A) protein is Peptide chain release factor 3.